A 490-amino-acid polypeptide reads, in one-letter code: Cytochrome P450 2C55 (490 aa).

Cys435 is a binding site for heme.

This sequence belongs to the cytochrome P450 family. Heme is required as a cofactor. Highest level in colon. Low levels in liver and small intestine.

It localises to the endoplasmic reticulum membrane. The protein localises to the microsome membrane. The catalysed reaction is an organic molecule + reduced [NADPH--hemoprotein reductase] + O2 = an alcohol + oxidized [NADPH--hemoprotein reductase] + H2O + H(+). In terms of biological role, metabolizes arachidonic acid mainly to 19-hydroxyeicosatetraenoic acid (HETE). This chain is Cytochrome P450 2C55, found in Mus musculus (Mouse).